The chain runs to 1138 residues: Nonsense-mediated mRNA decay factor SMG7 (1138 aa).

Ser-2 carries the N-acetylserine modification. TPR repeat units lie at residues 152-185 and 187-219; these read QHCLVHLGDIARYRNQTSQAESYYRHAAQLVPSN and QPYNQLAILASSKGDHLTTIFYYCRSIAVKFPF. Disordered stretches follow at residues 515-612, 649-745, 838-871, 990-1090, and 1106-1138; these read ATDG…LPSR, STAH…YQQA, QPNMDRRSKRSPGVFRPEQDPVPRMPFEDPKSSP, SLPA…PSME, and SSMMHPGPSALEQLLMQQKQKQQRGQGAMNPPH. A Phosphoserine modification is found at Ser-519. The segment covering 525 to 537 has biased composition (polar residues); that stretch reads VLSTGRNPSNSCD. A compositionally biased stretch (basic and acidic residues) spans 548-582; sequence ENIKPREVNQGRSFPPKEVKSQTELRKTPVSEARK. Position 575 is a phosphothreonine (Thr-575). Composition is skewed to polar residues over residues 584–597 and 649–673; these read PVTQTPSQTSNSQF and STAHSPAGNQVQAGKQSHIPYSQQR. The segment covering 674-721 has biased composition (low complexity); it reads PSGPGPMNQGPQQSQPPSQPPLTSLPAQPTAQSTSQLQVQALAQQQQS. A phosphoserine mark is found at Ser-732 and Ser-848. Residues 854 to 868 are compositionally biased toward basic and acidic residues; it reads PEQDPVPRMPFEDPK. Residues 990–999 are compositionally biased toward polar residues; the sequence is SLPASSDHST. Residues 1000-1026 are compositionally biased toward low complexity; it reads PASQSPHSSNPSSLPSSPPTHNHNSAP. Residues 1037–1051 are compositionally biased toward basic and acidic residues; the sequence is DNRDRRPADRWKTDK. A compositionally biased stretch (polar residues) spans 1063–1082; the sequence is SATSSSESSWHQASTPSGTW. Over residues 1118–1132 the composition is skewed to low complexity; the sequence is QLLMQQKQKQQRGQG.

In terms of assembly, part of a complex that contains SMG5, SMG7, PPP2CA, a short isoform of UPF3A (isoform UPF3AS, but not isoform UPF3AL) and phosphorylated UPF1. Interacts with DHX34; the interaction is RNA-independent.

The protein localises to the cytoplasm. The protein resides in the nucleus. Functionally, plays a role in nonsense-mediated mRNA decay. Recruits UPF1 to cytoplasmic mRNA decay bodies. Together with SMG5 is thought to provide a link to the mRNA degradation machinery involving exonucleolytic pathways, and to serve as an adapter for UPF1 to protein phosphatase 2A (PP2A), thereby triggering UPF1 dephosphorylation. This chain is Nonsense-mediated mRNA decay factor SMG7, found in Mus musculus (Mouse).